The sequence spans 320 residues: Beta-ketoacyl-[acyl-carrier-protein] synthase III (320 aa).

Residues C112 and H245 contribute to the active site. The tract at residues Q246–R250 is ACP-binding. The active site involves N275.

Belongs to the thiolase-like superfamily. FabH family. In terms of assembly, homodimer.

The protein localises to the cytoplasm. The catalysed reaction is malonyl-[ACP] + acetyl-CoA + H(+) = 3-oxobutanoyl-[ACP] + CO2 + CoA. It functions in the pathway lipid metabolism; fatty acid biosynthesis. Catalyzes the condensation reaction of fatty acid synthesis by the addition to an acyl acceptor of two carbons from malonyl-ACP. Catalyzes the first condensation reaction which initiates fatty acid synthesis and may therefore play a role in governing the total rate of fatty acid production. Possesses both acetoacetyl-ACP synthase and acetyl transacylase activities. Its substrate specificity determines the biosynthesis of branched-chain and/or straight-chain of fatty acids. The sequence is that of Beta-ketoacyl-[acyl-carrier-protein] synthase III from Streptococcus thermophilus (strain ATCC BAA-250 / LMG 18311).